The chain runs to 119 residues: Ribonuclease P protein component (119 aa).

It belongs to the RnpA family. As to quaternary structure, consists of a catalytic RNA component (M1 or rnpB) and a protein subunit.

The enzyme catalyses Endonucleolytic cleavage of RNA, removing 5'-extranucleotides from tRNA precursor.. Its function is as follows. RNaseP catalyzes the removal of the 5'-leader sequence from pre-tRNA to produce the mature 5'-terminus. It can also cleave other RNA substrates such as 4.5S RNA. The protein component plays an auxiliary but essential role in vivo by binding to the 5'-leader sequence and broadening the substrate specificity of the ribozyme. The sequence is that of Ribonuclease P protein component from Serratia proteamaculans (strain 568).